A 152-amino-acid chain; its full sequence is Endoribonuclease YbeY (152 aa).

Residues His117, His121, and His127 each coordinate Zn(2+).

It belongs to the endoribonuclease YbeY family. Requires Zn(2+) as cofactor.

The protein resides in the cytoplasm. Its function is as follows. Single strand-specific metallo-endoribonuclease involved in late-stage 70S ribosome quality control and in maturation of the 3' terminus of the 16S rRNA. The chain is Endoribonuclease YbeY from Sulfurihydrogenibium sp. (strain YO3AOP1).